Consider the following 61-residue polypeptide: MAKTSMIVKQKREQKFKVREYTRCERCGRPHSVIRKFKLCRICFRELAYKGHIPGVKKASW.

Positions 24, 27, 40, and 43 each coordinate Zn(2+).

Belongs to the universal ribosomal protein uS14 family. Zinc-binding uS14 subfamily. In terms of assembly, part of the 30S ribosomal subunit. Contacts proteins S3 and S10. Zn(2+) is required as a cofactor.

Binds 16S rRNA, required for the assembly of 30S particles and may also be responsible for determining the conformation of the 16S rRNA at the A site. This is Small ribosomal subunit protein uS14C from Bacillus licheniformis (strain ATCC 14580 / DSM 13 / JCM 2505 / CCUG 7422 / NBRC 12200 / NCIMB 9375 / NCTC 10341 / NRRL NRS-1264 / Gibson 46).